The primary structure comprises 530 residues: Metal transporter Nramp2 (530 aa).

Residues 1-35 (MENDVKENLEEEEDRLLPPPPPSQSLPSTDSESEA) are disordered. The next 12 helical transmembrane spans lie at 68-88 (LWLFTGPGFLMSIAFLDPGNL), 96-116 (AIAGYSLLWLLMWATAMGLLI), 153-173 (LALIGADIQEVIGSAIAIQIL), 177-197 (FLPLWAGVVITASDCFLFLFL), 205-225 (LEAVFAVLIATMGLSFAWMFG), 251-271 (AVGVVGCVIMPHNVFLHSALV), 297-317 (VALFISFMINLFVTTVFAKGF), 339-359 (FGGGLLPILYIWGIGLLAAGQ), 395-415 (IVPTMIVAIVFNTSEASLDVL), 418-438 (WLNVLQSVQIPFALLPLLTLV), 456-476 (IAWTVAALVMIINGYLLLDFF), and 484-504 (LFGVTVCVWTTAYIAFIVYLI).

It belongs to the NRAMP (TC 2.A.55) family.

It localises to the membrane. In terms of biological role, seems to be involved in iron uptake. This chain is Metal transporter Nramp2 (NRAMP2), found in Arabidopsis thaliana (Mouse-ear cress).